The primary structure comprises 20 residues: MDLIPDLAVETWLLLAVTLV.

The protein belongs to the cytochrome P450 family. Heme serves as cofactor.

Its subcellular location is the endoplasmic reticulum membrane. The protein resides in the microsome membrane. It carries out the reaction an organic molecule + reduced [NADPH--hemoprotein reductase] + O2 = an alcohol + oxidized [NADPH--hemoprotein reductase] + H2O + H(+). In terms of biological role, 6-beta-testosterone hydroxylase. The chain is Cytochrome P450 3A5 from Papio sp. (Baboon).